Here is a 218-residue protein sequence, read N- to C-terminus: Cytochrome b6 (218 aa).

A helical membrane pass occupies residues isoleucine 35–phenylalanine 55. Residue cysteine 38 participates in heme c binding. 2 residues coordinate heme b: histidine 89 and histidine 103. The next 3 membrane-spanning stretches (helical) occupy residues alanine 93–phenylalanine 113, leucine 119–tyrosine 139, and leucine 189–isoleucine 209. 2 residues coordinate heme b: histidine 190 and histidine 205.

Belongs to the cytochrome b family. PetB subfamily. In terms of assembly, the 4 large subunits of the cytochrome b6-f complex are cytochrome b6, subunit IV (17 kDa polypeptide, PetD), cytochrome f and the Rieske protein, while the 4 small subunits are PetG, PetL, PetM and PetN. The complex functions as a dimer. It depends on heme b as a cofactor. The cofactor is heme c.

It localises to the cellular thylakoid membrane. Component of the cytochrome b6-f complex, which mediates electron transfer between photosystem II (PSII) and photosystem I (PSI), cyclic electron flow around PSI, and state transitions. The sequence is that of Cytochrome b6 from Prochlorococcus marinus (strain SARG / CCMP1375 / SS120).